A 470-amino-acid polypeptide reads, in one-letter code: Proton-coupled amino acid transporter 3 (470 aa).

Residues 1–46 (MSLLGRDYNSELNSLDNGPQSPSESSSSITSENVHPAGEAGLSMMQ) lie on the Cytoplasmic side of the membrane. The span at 10–20 (SELNSLDNGPQ) shows a compositional bias: polar residues. Residues 10 to 33 (SELNSLDNGPQSPSESSSSITSEN) form a disordered region. The span at 21-31 (SPSESSSSITS) shows a compositional bias: low complexity. Residues 47–67 (TLIHLLKCNIGTGLLGLPLAI) traverse the membrane as a helical segment. The Extracellular portion of the chain corresponds to 68 to 71 (KNAG). Residues 72–92 (LLVGPVSLLAIGVLTVHCMVI) form a helical membrane-spanning segment. Residues 93–137 (LLNCAQHLSQRLQKTFVNYGEATMYGLETCPNTWLRAHAVWGRYT) are Cytoplasmic-facing. A helical membrane pass occupies residues 138 to 158 (VSFLLVITQLGFCSVYFMFMA). Residues 159-185 (DNLQQMVEKAHVTSNICQPREILTLTP) lie on the Extracellular side of the membrane. The chain crosses the membrane as a helical span at residues 186-206 (ILDIRFYMLIILPFLILLVFI). Topologically, residues 207 to 210 (QNLK) are cytoplasmic. A helical membrane pass occupies residues 211–231 (VLSVFSTLANITTLGSMALIF). Over 232 to 252 (EYIMEGIPYPSNLPLMANWKT) the chain is Extracellular. The chain crosses the membrane as a helical span at residues 253–273 (FLLFFGTAIFTFEGVGMVLPL). Topologically, residues 274 to 284 (KNQMKHPQQFS) are cytoplasmic. A helical membrane pass occupies residues 285 to 305 (FVLYLGMSIVIILYILLGTLG). The Extracellular segment spans residues 306–337 (YMKFGSDTQASITLNLPNCWLYQSVKLMYSIG). The helical transmembrane segment at 338 to 358 (IFFTYALQFHVPAEIIIPFAI) threads the bilayer. Residues 359–367 (SQVSESWAL) lie on the Cytoplasmic side of the membrane. The chain crosses the membrane as a helical span at residues 368–388 (FVDLSVRSALVCLTCVSAILI). At 389-392 (PRLD) the chain is on the extracellular side. The helical transmembrane segment at 393-413 (LVISLVGSVSSSALALIIPAL) threads the bilayer. Topologically, residues 414–425 (LEIVIFYSEDMS) are cytoplasmic. A helical membrane pass occupies residues 426–446 (CVTIAKDIMISIVGLLGCIFG). Residues 447-470 (TYQALYELPQPISHSMANSTGVHA) lie on the Extracellular side of the membrane.

Belongs to the amino acid/polyamine transporter 2 family. In terms of tissue distribution, specifically expressed in testis.

The protein localises to the membrane. The protein is Proton-coupled amino acid transporter 3 (SLC36A3) of Homo sapiens (Human).